We begin with the raw amino-acid sequence, 155 residues long: Endoribonuclease YbeY (155 aa).

Zn(2+) is bound by residues H120, H124, and H130.

It belongs to the endoribonuclease YbeY family. Zn(2+) serves as cofactor.

The protein localises to the cytoplasm. Functionally, single strand-specific metallo-endoribonuclease involved in late-stage 70S ribosome quality control and in maturation of the 3' terminus of the 16S rRNA. The polypeptide is Endoribonuclease YbeY (Staphylococcus aureus (strain MSSA476)).